Consider the following 343-residue polypeptide: Anthranilate phosphoribosyltransferase (343 aa).

5-phospho-alpha-D-ribose 1-diphosphate contacts are provided by residues Gly-84, 87-88 (GD), Thr-92, 94-97 (NIST), 112-120 (KHGNRGVSS), and Ser-124. Position 84 (Gly-84) interacts with anthranilate. Ser-96 is a binding site for Mg(2+). Residue Asn-115 coordinates anthranilate. Anthranilate is bound at residue Arg-170. Positions 229 and 230 each coordinate Mg(2+).

Belongs to the anthranilate phosphoribosyltransferase family. In terms of assembly, homodimer. Mg(2+) is required as a cofactor.

It catalyses the reaction N-(5-phospho-beta-D-ribosyl)anthranilate + diphosphate = 5-phospho-alpha-D-ribose 1-diphosphate + anthranilate. It functions in the pathway amino-acid biosynthesis; L-tryptophan biosynthesis; L-tryptophan from chorismate: step 2/5. Catalyzes the transfer of the phosphoribosyl group of 5-phosphorylribose-1-pyrophosphate (PRPP) to anthranilate to yield N-(5'-phosphoribosyl)-anthranilate (PRA). The protein is Anthranilate phosphoribosyltransferase of Burkholderia ambifaria (strain MC40-6).